Reading from the N-terminus, the 221-residue chain is Eukaryotic translation initiation factor 4E-2 (221 aa).

Positions 1-20 (MADELNKAALEEYKSSSVED) are enriched in basic and acidic residues. A disordered region spans residues 1 to 36 (MADELNKAALEEYKSSSVEDRGEEGEIVGESDDTAS). Acidic residues predominate over residues 21-33 (RGEEGEIVGESDD). 2 EIF4G-binding regions span residues 46–49 (HPLE) and 56–92 (FDNP…NNIH). Residues 64–69 (KQAAWG), Lys-96, and 114–115 (WE) each bind mRNA. Cysteines 119 and 157 form a disulfide. The segment at 140–149 (YTLLALIGEQ) is EIF4G-binding. MRNA contacts are provided by residues 164-169 (RVRQEK) and 209-213 (KKLDR).

Belongs to the eukaryotic initiation factor 4E family. EIF4F is a multi-subunit complex, the composition of which varies with external and internal environmental conditions. It is composed of at least EIF4A, EIF4E and EIF4G. EIF4E is also known to interact with other partners. In higher plants two isoforms of EIF4F have been identified, named isoform EIF4F and isoform EIF(iso)4F. Isoform EIF4F has subunits p220 and p26, whereas isoform EIF(iso)4F has subunits p82 and p28. As to quaternary structure, (Microbial infection) Interacts with potyvirus viral genome-linked protein (VPg) in the nucleus; mostly potato virus Y (PVY-LYE84) and tobacco etch virus (TEV-HAT) VPg, but not with PVY-LYE90 and pepper mottle virus (PepMoV) VPg; these interactions are possible in susceptible hosts but impaired in resistant plants. In terms of processing, according to the redox status, the Cys-119-Cys-157 disulfide bridge may have a role in regulating protein function by affecting its ability to bind capped mRNA.

It localises to the nucleus. Its subcellular location is the cytoplasm. In terms of biological role, component of the protein complex eIF4F, which is involved in the recognition of the mRNA cap, ATP-dependent unwinding of 5'-terminal secondary structure and recruitment of mRNA to the ribosome. Recognizes and binds the 7-methylguanosine-containing mRNA cap during an early step in the initiation of protein synthesis and facilitates ribosome binding by inducing the unwinding of the mRNAs secondary structures. Key component of recessive resistance to potyviruses. Functionally, (Microbial infection) Susceptibility host factor required for viral infection (e.g. potato virus Y (PVY) and tobacco etch virus (TEV)) by recruiting viral RNAs to the host ribosomal complex via an interaction with viral genome-linked protein (VPg). This is Eukaryotic translation initiation factor 4E-2 from Solanum lycopersicum (Tomato).